Consider the following 176-residue polypeptide: Large ribosomal subunit protein uL6 (176 aa).

Belongs to the universal ribosomal protein uL6 family. As to quaternary structure, part of the 50S ribosomal subunit.

This protein binds to the 23S rRNA, and is important in its secondary structure. It is located near the subunit interface in the base of the L7/L12 stalk, and near the tRNA binding site of the peptidyltransferase center. The chain is Large ribosomal subunit protein uL6 from Burkholderia cenocepacia (strain HI2424).